Here is a 1188-residue protein sequence, read N- to C-terminus: MAGHEVRYGKHRTRRSFSRIKEVLDLPNLIEIQTDSFQDFLDSGLKEVFEDVLPISNFTDTMELEFVGYEFKEPKYTLEEARIHDASYSAPIFVTFRLVNKETGEIKTQEVFFGDFPIMTEMGTFIINGGERIIVSQLVRSPGVYFNDKVDKNGKVGYGSTVIPNRGAWLELETDSKDIAYTRIDRTRKIPFTTLVRALGFSGDDEIVDIFGESDLVRNTIEKDIHKNPSDSRTDEALKEIYERLRPGEPKTADSSRSLLIARFFDARRYDLAAVGRYKVNKKLNIKTRLLNQIIAENLVDAETGEILVEAGTEMTRSVIESIEEHLDGDLNKFVYTPNDYAVVTEPVVLQKFKVVSPIDPDRVVTIVGNANPDDKVRALTPADILAEMSYFLNLAEGLGKVDDIDHLGNRRIRAVGELLANQFRIGLARMERNVRERMSVQDNDVLTPQQIINIRPVTAAVKEFFGSSQLSQFMDQHNPLSELSHKRRLSALGPGGLTRDRAGYEVRDVHYTHYGRMCPIETPEGPNIGLINNLSSFGHLNKYGFIQTPYRKVDRATGTVTNEIVWLTADEEDEYTVAQANSKLNEDGTFAEEIVMGRHQGNNQEFSASVVDFVDVSPKQVVAVATACIPFLENDDSNRALMGANMQRQAVPLIDPKAPYVGTGMEYQAAHDSGAAVIAQQNGKVVFSDAEKVEIRRQDGSLDVYHITKFRRSNSGTAYNQRTLVKVGDIVEKGDFIADGPSMENGEMALGQNPVVAYMTWEGYNFEDAVIMSERLVKEDVYTSVHLEEFESETRDTKLGPEEITREIPNVGEEALKDLDEMGIIRIGAEVKEGDILVGKVTPKGEKDLSAEERLLHAIFGDKSREVRDTSLRVPHGGDGIVRDVKIFTRANGDELQSGVNMLVRVYIAQKRKIKVGDKMAGRHGNKGVVSRIVPVEDMPYLPDGTPVDIMLNPLGVPSRMNIGQVMELHLGMAARNLGIHIATPVFDGASSEDLWDTVREAGMDSDAKTVLYDGRTGEPFDNRVSVGVMYMIKLHHMVDDKLHARSVGPYSLVTQQPLGGKAQFGGQRFGEMEVWALEAYGASNVLQEILTYKSDDVTGRLKAYEAITKGKPIPKPGVPESFRVLVKELQSLGLDMRVLDEDDNEVELRDLDEGEDDDIMHVDDLEKAREKQAQETQEVSETTDEK.

Belongs to the RNA polymerase beta chain family. The RNAP catalytic core consists of 2 alpha, 1 beta, 1 beta' and 1 omega subunit. When a sigma factor is associated with the core the holoenzyme is formed, which can initiate transcription.

It carries out the reaction RNA(n) + a ribonucleoside 5'-triphosphate = RNA(n+1) + diphosphate. Functionally, DNA-dependent RNA polymerase catalyzes the transcription of DNA into RNA using the four ribonucleoside triphosphates as substrates. In Streptococcus pyogenes serotype M1, this protein is DNA-directed RNA polymerase subunit beta.